The following is a 237-amino-acid chain: Small ribosomal subunit protein uS3 (237 aa).

The KH type-2 domain occupies 17–86; the sequence is VERHLGHELK…SPQIEVQQVD (70 aa).

This sequence belongs to the universal ribosomal protein uS3 family. As to quaternary structure, part of the 30S ribosomal subunit.

In terms of biological role, binds the lower part of the 30S subunit head. This Methanospirillum hungatei JF-1 (strain ATCC 27890 / DSM 864 / NBRC 100397 / JF-1) protein is Small ribosomal subunit protein uS3.